We begin with the raw amino-acid sequence, 405 residues long: Tryptophan synthase beta chain (405 aa).

At K95 the chain carries N6-(pyridoxal phosphate)lysine.

The protein belongs to the TrpB family. Tetramer of two alpha and two beta chains. Requires pyridoxal 5'-phosphate as cofactor.

The enzyme catalyses (1S,2R)-1-C-(indol-3-yl)glycerol 3-phosphate + L-serine = D-glyceraldehyde 3-phosphate + L-tryptophan + H2O. The protein operates within amino-acid biosynthesis; L-tryptophan biosynthesis; L-tryptophan from chorismate: step 5/5. Functionally, the beta subunit is responsible for the synthesis of L-tryptophan from indole and L-serine. This Pseudomonas putida (Arthrobacter siderocapsulatus) protein is Tryptophan synthase beta chain (trpB).